The following is a 429-amino-acid chain: Protein cereblon (429 aa).

The interval 1–30 is disordered; sequence MGNHLPLLPAESEEEDEMEVEDQDSKEAKK. Acidic residues predominate over residues 11–22; that stretch reads ESEEEDEMEVED. Phosphoserine is present on S12. Residues 68–306 form the Lon N-terminal domain; that stretch reads IPVLPQVMMI…CELDIMNKCT (239 aa). The CULT domain occupies 305–413; it reads CTSLCCKQCQ…LTRSALLPTI (109 aa). The Zn(2+) site is built by C310 and C313. Residues H365, W367, and W373 each coordinate (S)-thalidomide. C378 and C381 together coordinate Zn(2+).

Belongs to the CRBN family. Component of a DCX (DDB1-CUL4-X-box) protein ligase complex, at least composed of CRBN, CUL4A, DDB1 and RBX1. Interacts directly with DDB1. Interacts with KCNT1. Interacts with ILF2. Interacts with TRAF6 and ECSIT. Post-translationally, ubiquitinated, ubiquitination is mediated by its own DCX protein ligase complex.

It is found in the cytoplasm. It localises to the nucleus. Its subcellular location is the membrane. The protein operates within protein modification; protein ubiquitination. Functionally, substrate recognition component of a DCX (DDB1-CUL4-X-box) E3 protein ligase complex that mediates the ubiquitination and subsequent proteasomal degradation of target proteins, such as MEIS2, ILF2 or GLUL. Normal degradation of key regulatory proteins is required for normal limb outgrowth and expression of the fibroblast growth factor FGF8. Maintains presynaptic glutamate release and consequently cognitive functions, such as memory and learning, by negatively regulating large-conductance calcium-activated potassium (BK) channels in excitatory neurons. Likely to function by regulating the assembly and neuronal surface expression of BK channels via its interaction with KCNT1. May also be involved in regulating anxiety-like behaviors via a BK channel-independent mechanism. Plays a negative role in TLR4 signaling by interacting with TRAF6 and ECSIT, leading to inhibition of ECSIT ubiquitination, an important step of the signaling. The polypeptide is Protein cereblon (CRBN) (Pongo abelii (Sumatran orangutan)).